The following is a 264-amino-acid chain: uncharacterized protein (264 aa).

The first 22 residues, 1 to 22, serve as a signal peptide directing secretion; that stretch reads MKRKLTICLLIALIFYNGNAKA. Residues 227-247 form a helical membrane-spanning segment; it reads LLWVIITTGSIIITALTYVGY.

Its subcellular location is the membrane. This is an uncharacterized protein from Bacillus subtilis (strain 168).